Here is a 388-residue protein sequence, read N- to C-terminus: Deoxyuridine 5'-triphosphate nucleotidohydrolase (388 aa).

Residues 77–88 (EEKYDKEQHPGE) show a composition bias toward basic and acidic residues. Disordered regions lie at residues 77-96 (EEKYDKEQHPGEDEASSPLP) and 336-388 (THTP…PRHP). Residues 351–363 (VDDDVDETEEDEK) are compositionally biased toward acidic residues.

Belongs to the dUTPase family. Requires Mg(2+) as cofactor.

Its subcellular location is the virion. It carries out the reaction dUTP + H2O = dUMP + diphosphate + H(+). The protein operates within pyrimidine metabolism; dUMP biosynthesis; dUMP from dCTP (dUTP route): step 2/2. Involved in nucleotide metabolism: produces dUMP, the immediate precursor of thymidine nucleotides and decreases the intracellular concentration of dUTP to avoid uracil incorporation into viral DNA. The chain is Deoxyuridine 5'-triphosphate nucleotidohydrolase from Human cytomegalovirus (strain AD169) (HHV-5).